The sequence spans 251 residues: Meso-2,3-butanediol dehydrogenase (251 aa).

Positions 15, 17, 36, 60, 61, and 87 each coordinate NAD(+). Residues Ser138, Ser140, and Tyr151 each coordinate (R)-acetoin. Ser138 provides a ligand contact to (S)-acetoin. The NAD(+) site is built by Tyr151, Lys155, Val184, and Thr186. Residue Tyr151 coordinates (S)-acetoin. Tyr151 functions as the Proton acceptor in the catalytic mechanism.

It belongs to the short-chain dehydrogenases/reductases (SDR) family. In terms of assembly, homotetramer; dimer of dimers.

The catalysed reaction is (R,S)-butane-2,3-diol + NAD(+) = (R)-acetoin + NADH + H(+). It carries out the reaction (S,S)-butane-2,3-diol + NAD(+) = (S)-acetoin + NADH + H(+). It catalyses the reaction (S)-acetoin + NAD(+) = diacetyl + NADH + H(+). Oxidation of meso-2,3-butanediol is enhanced in the presence of Fe(2+). Reduction of diacetyl and (3S/3R)-acetoin is slightly enhanced in the presence of Mg(2+) and Mn(2+). Activity is inhibited by several metal ions, particularly Fe(3+) for reduction of diacetyl and acetoin. Its function is as follows. Catalyzes the NAD-dependent oxidation of meso-2,3-butanediol to (3R)-acetoin, and of (2S,3S)-2,3-butanediol to (3S)-acetoin, with much lower efficiency. Can also oxidize several primary alcohols such as glycerol, 1-2-pentanediol and 1,2-propanediol, with lower activity. Cannot use (2R,3R)-2,3-butanediol. In the presence of NADH, catalyzes the reduction of (3R)-acetoin to meso-2,3-butanediol, of (3S)-acetoin to (2S,3S)-2,3-butanediol and of diacetyl to (3S)-acetoin. No activity is detected with NADPH/NADP(+). The sequence is that of Meso-2,3-butanediol dehydrogenase from Serratia marcescens.